We begin with the raw amino-acid sequence, 270 residues long: 3-methyl-2-oxobutanoate hydroxymethyltransferase (270 aa).

2 residues coordinate Mg(2+): D50 and D89. Residues 50–51 (DS), D89, and K118 contribute to the 3-methyl-2-oxobutanoate site. E120 contacts Mg(2+). Catalysis depends on E187, which acts as the Proton acceptor.

It belongs to the PanB family. In terms of assembly, homodecamer; pentamer of dimers. The cofactor is Mg(2+).

Its subcellular location is the cytoplasm. It catalyses the reaction 3-methyl-2-oxobutanoate + (6R)-5,10-methylene-5,6,7,8-tetrahydrofolate + H2O = 2-dehydropantoate + (6S)-5,6,7,8-tetrahydrofolate. Its pathway is cofactor biosynthesis; (R)-pantothenate biosynthesis; (R)-pantoate from 3-methyl-2-oxobutanoate: step 1/2. Its function is as follows. Catalyzes the reversible reaction in which hydroxymethyl group from 5,10-methylenetetrahydrofolate is transferred onto alpha-ketoisovalerate to form ketopantoate. The protein is 3-methyl-2-oxobutanoate hydroxymethyltransferase of Helicobacter acinonychis (strain Sheeba).